The following is a 436-amino-acid chain: Trigger factor (436 aa).

The 86-residue stretch at 162-247 folds into the PPIase FKBP-type domain; that stretch reads GDRVIIDFEG…LNNVSEATLP (86 aa).

Belongs to the FKBP-type PPIase family. Tig subfamily.

Its subcellular location is the cytoplasm. It carries out the reaction [protein]-peptidylproline (omega=180) = [protein]-peptidylproline (omega=0). Functionally, involved in protein export. Acts as a chaperone by maintaining the newly synthesized protein in an open conformation. Functions as a peptidyl-prolyl cis-trans isomerase. This Neisseria meningitidis serogroup C (strain 053442) protein is Trigger factor.